The primary structure comprises 512 residues: Cobyric acid synthase (512 aa).

In terms of domain architecture, GATase cobBQ-type spans 251 to 451 (ALDIAVIRLP…IHGLFDSHHF (201 aa)). The active-site Nucleophile is the C332. H443 is a catalytic residue.

Belongs to the CobB/CobQ family. CobQ subfamily.

Its pathway is cofactor biosynthesis; adenosylcobalamin biosynthesis. Catalyzes amidations at positions B, D, E, and G on adenosylcobyrinic A,C-diamide. NH(2) groups are provided by glutamine, and one molecule of ATP is hydrogenolyzed for each amidation. In Yersinia enterocolitica serotype O:8 / biotype 1B (strain NCTC 13174 / 8081), this protein is Cobyric acid synthase.